The primary structure comprises 97 residues: Aspartyl/glutamyl-tRNA(Asn/Gln) amidotransferase subunit C (97 aa).

It belongs to the GatC family. Heterotrimer of A, B and C subunits.

The catalysed reaction is L-glutamyl-tRNA(Gln) + L-glutamine + ATP + H2O = L-glutaminyl-tRNA(Gln) + L-glutamate + ADP + phosphate + H(+). The enzyme catalyses L-aspartyl-tRNA(Asn) + L-glutamine + ATP + H2O = L-asparaginyl-tRNA(Asn) + L-glutamate + ADP + phosphate + 2 H(+). Functionally, allows the formation of correctly charged Asn-tRNA(Asn) or Gln-tRNA(Gln) through the transamidation of misacylated Asp-tRNA(Asn) or Glu-tRNA(Gln) in organisms which lack either or both of asparaginyl-tRNA or glutaminyl-tRNA synthetases. The reaction takes place in the presence of glutamine and ATP through an activated phospho-Asp-tRNA(Asn) or phospho-Glu-tRNA(Gln). This is Aspartyl/glutamyl-tRNA(Asn/Gln) amidotransferase subunit C from Listeria welshimeri serovar 6b (strain ATCC 35897 / DSM 20650 / CCUG 15529 / CIP 8149 / NCTC 11857 / SLCC 5334 / V8).